The chain runs to 177 residues: Nucleoside triphosphate/diphosphate phosphatase (177 aa).

Residue R23 is the Proton donor of the active site. Mg(2+)-binding residues include N87, D103, D105, D107, D120, and E123.

It belongs to the Ntdp family. The cofactor is Mg(2+).

It carries out the reaction a ribonucleoside 5'-triphosphate + H2O = a ribonucleoside 5'-diphosphate + phosphate + H(+). The enzyme catalyses a ribonucleoside 5'-diphosphate + H2O = a ribonucleoside 5'-phosphate + phosphate + H(+). Its function is as follows. Has nucleoside phosphatase activity towards nucleoside triphosphates and nucleoside diphosphates. In Streptococcus pyogenes serotype M3 (strain ATCC BAA-595 / MGAS315), this protein is Nucleoside triphosphate/diphosphate phosphatase.